A 90-amino-acid chain; its full sequence is Small ribosomal subunit protein uS17 (90 aa).

It belongs to the universal ribosomal protein uS17 family. As to quaternary structure, part of the 30S ribosomal subunit.

One of the primary rRNA binding proteins, it binds specifically to the 5'-end of 16S ribosomal RNA. The protein is Small ribosomal subunit protein uS17 of Acidiphilium cryptum (strain JF-5).